The sequence spans 147 residues: Transcriptional repressor NrdR (147 aa).

Residues 3-34 (CPFCGHLETQVVETRVSEDADFVRRRRQCSAC) fold into a zinc finger. Residues 49 to 139 (PVVVKKDGSR…VYRSFEDVDE (91 aa)) form the ATP-cone domain.

This sequence belongs to the NrdR family. Zn(2+) is required as a cofactor.

Its function is as follows. Negatively regulates transcription of bacterial ribonucleotide reductase nrd genes and operons by binding to NrdR-boxes. The sequence is that of Transcriptional repressor NrdR from Variovorax paradoxus (strain S110).